A 158-amino-acid chain; its full sequence is Phosphopantetheine adenylyltransferase (158 aa).

Serine 9 is a binding site for substrate. Residues 9 to 10 (SF) and histidine 17 each bind ATP. Substrate is bound by residues lysine 41, threonine 73, and arginine 87. Residues 88-90 (GLR), glutamate 98, and 122-128 (NQNISSS) contribute to the ATP site.

Belongs to the bacterial CoaD family. As to quaternary structure, homohexamer. Requires Mg(2+) as cofactor.

The protein resides in the cytoplasm. It carries out the reaction (R)-4'-phosphopantetheine + ATP + H(+) = 3'-dephospho-CoA + diphosphate. It participates in cofactor biosynthesis; coenzyme A biosynthesis; CoA from (R)-pantothenate: step 4/5. Reversibly transfers an adenylyl group from ATP to 4'-phosphopantetheine, yielding dephospho-CoA (dPCoA) and pyrophosphate. This Leuconostoc citreum (strain KM20) protein is Phosphopantetheine adenylyltransferase.